A 313-amino-acid chain; its full sequence is Protein phosphatase PTC7 homolog fig (313 aa).

The 261-residue stretch at 47–307 (KEPLTDLQLR…DDITVILASL (261 aa)) folds into the PPM-type phosphatase domain. Mn(2+) is bound by residues Asp-83, Gly-84, and Asp-229.

This sequence belongs to the PP2C family. Requires Mg(2+) as cofactor. It depends on Mn(2+) as a cofactor.

The enzyme catalyses O-phospho-L-seryl-[protein] + H2O = L-seryl-[protein] + phosphate. It catalyses the reaction O-phospho-L-threonyl-[protein] + H2O = L-threonyl-[protein] + phosphate. In Drosophila virilis (Fruit fly), this protein is Protein phosphatase PTC7 homolog fig.